A 440-amino-acid chain; its full sequence is Streptokinase A (440 aa).

The N-terminal stretch at 1-26 is a signal peptide; sequence MKNYLSIGVIALLFALTFGTVKSVQA.

This protein is not a protease, but it activates plasminogen by complexing with it. As a potential virulence factor, it is thought to prevent the formation of effective fibrin barriers around the site of infection, thereby contributing to the invasiveness of the cells. In Streptococcus pyogenes serotype M1, this protein is Streptokinase A (ska).